Reading from the N-terminus, the 509-residue chain is Cytochrome P450 monooxygenase traB (509 aa).

A helical membrane pass occupies residues 8-28; it reads LVELVSITGGLIVLFIAYTGF. Cys-453 provides a ligand contact to heme.

The protein belongs to the cytochrome P450 family. It depends on heme as a cofactor.

The protein localises to the membrane. The protein operates within secondary metabolite biosynthesis. In terms of biological role, cytochrome P450 monooxygenase; part of the tra gene cluster that produces terrestric acid. The clavatol biosynthesis cluster cla and the terrestric acid cluster tra are both involved in the production of peniphenones and penilactones. The non-reducing PKS claF is responsible for the formation of clavatol from successive condensations of 3 malonyl-CoA units, presumably with a simple acetyl-CoA starter unit, and 2 methylation steps. The esterase claE probably collaborates with claF by catalyzing the hydrolysis of ACP-bound acyl intermediates to free the ACP from stalled intermediates. The clavatol oxidase claD then converts clavatol to hydroxyclavatol. Spontaneous dehydration of hydroxyclavatol leads to the accumulation of the highly active ortho-quinone methide. On the other hand, the PKS-NRPS hybrid traA is involved in the formation of crustosic acid, with the help of traB and traD. The polyketide synthase module (PKS) of traA is responsible for the synthesis of the polyketide backbone via the condensation of an acetyl-CoA starter unit with 3 malonyl-CoA units. The downstream nonribosomal peptide synthetase (NRPS) module then amidates the carboxyl end of the polyketide with L-malic acid. Because traA lacks a designated enoylreductase (ER) domain, the required activity is provided the enoyl reductase traG. Crustosic acid undergoes decarboxylation and isomerization to the terrestric acid, catalyzed by the 2-oxoglutarate-dependent dioxygenase traH. Both acids are further converted to the 2 gamma-butyrolactones (R)-5-methyltetronic acid and (S)-5-carboxylmethyltetronic acid, with involvement of the cytochrome P450 monooxygenase claJ. Spontaneous addition of the methide to these gamma-butyrolactones leads to peniphenone D and penilactone D, which undergo again stereospecific attacking by methide to give penilactones A and B. The polypeptide is Cytochrome P450 monooxygenase traB (Penicillium crustosum (Blue mold fungus)).